Consider the following 297-residue polypeptide: Non-homologous end-joining factor 1 (297 aa).

The globular head stretch occupies residues Met-1–Leu-131. The segment at Pro-220–Ser-286 is C-terminal tail. A disordered region spans residues Ala-222–Met-297. Residues Gly-232 to Gln-255 show a composition bias toward polar residues. A compositionally biased stretch (low complexity) spans Val-263–Ser-286. The XLM signature appears at Lys-287 to Met-297. Over residues Lys-287–Met-297 the composition is skewed to basic residues.

Belongs to the XRCC4-XLF family. XLF subfamily. In terms of assembly, homodimer. Interacts with xrcc4; the interaction is direct and is mediated via a head-to-head interaction between N-terminal head regions. Component of the core long-range non-homologous end joining (NHEJ) complex (also named DNA-PK complex) composed of prkdc/DNA-PKcs, lig4, xrcc4, xrcc6/Ku70, xrcc5/Ku80 and nhej1/xlf.

It is found in the nucleus. In terms of biological role, DNA repair protein involved in DNA non-homologous end joining (NHEJ); required for double-strand break (DSB) repair and V(D)J recombination. It is also involved in telomere maintenance. Plays a key role in NHEJ by promoting the ligation of various mismatched and non-cohesive ends. In some studies, has been shown to associate with xrcc4 to form alternating helical filaments that bridge DNA and act like a bandage, holding together the broken DNA until it is repaired. Alternatively, it has also been shown that rather than forming filaments, a single nhej1 dimer interacts through both head domains with xrcc4 to promote the close alignment of DNA ends. The xrcc4-nhej1/xlf subcomplex binds to the DNA fragments of a DSB in a highly diffusive manner and robustly bridges two independent DNA molecules, holding the broken DNA fragments in close proximity to one other. The mobility of the bridges ensures that the ends remain accessible for further processing by other repair factors. In Xenopus laevis (African clawed frog), this protein is Non-homologous end-joining factor 1.